A 141-amino-acid chain; its full sequence is Putative lipoprotein Tanf_09445 (141 aa).

A signal peptide spans 1 to 20 (MKQKIILWIGALLLLTAGTG). Cysteine 21 carries the N-palmitoyl cysteine lipid modification. Cysteine 21 is lipidated: S-diacylglycerol cysteine.

The protein resides in the cell membrane. This chain is Putative lipoprotein Tanf_09445, found in Tannerella forsythia (strain ATCC 43037 / JCM 10827 / CCUG 21028 A / KCTC 5666 / FDC 338) (Bacteroides forsythus).